We begin with the raw amino-acid sequence, 432 residues long: Adenylosuccinate synthetase (432 aa).

GTP contacts are provided by residues 11–17 (GDEGKGK) and 39–41 (GHT). Catalysis depends on D12, which acts as the Proton acceptor. The Mg(2+) site is built by D12 and G39. IMP-binding positions include 12–15 (DEGK), 37–40 (NAGH), T134, R148, N230, T245, and R309. H40 acts as the Proton donor in catalysis. 305–311 (VTTGRKR) contacts substrate. GTP is bound by residues R311, 337-339 (KLD), and 419-421 (GTG).

Belongs to the adenylosuccinate synthetase family. As to quaternary structure, homodimer. Mg(2+) serves as cofactor.

The protein localises to the cytoplasm. It catalyses the reaction IMP + L-aspartate + GTP = N(6)-(1,2-dicarboxyethyl)-AMP + GDP + phosphate + 2 H(+). The protein operates within purine metabolism; AMP biosynthesis via de novo pathway; AMP from IMP: step 1/2. In terms of biological role, plays an important role in the de novo pathway and in the salvage pathway of purine nucleotide biosynthesis. Catalyzes the first committed step in the biosynthesis of AMP from IMP. This is Adenylosuccinate synthetase from Kluyveromyces lactis (strain ATCC 8585 / CBS 2359 / DSM 70799 / NBRC 1267 / NRRL Y-1140 / WM37) (Yeast).